A 257-amino-acid polypeptide reads, in one-letter code: MGVRVKRFDLVRVKDSEAYKDSDFVAVEEPLNIRTCFEKCEDFAIIMRTPGDDKELSLGFLYSEGVINSIHDVEDIKQVENNVIEVKLNKPIGIRIRELIVNSSCGVCGRAFLYTLNILKSDLKVKREVIFSFPEKLREKQSVFNISGGLHATALFNPQGELLFIYEDVGRHNAVDKVVGRLLLEDKIPASNYIMQVSGRLGYEIVSKGIKAGIPIICGISAPTSLAIEIAEEAGLTLIGFLRGKSLNIYTHSERIY.

Cys-105 serves as the catalytic Cysteine persulfide intermediate.

The protein belongs to the FdhD family.

Its subcellular location is the cytoplasm. Required for formate dehydrogenase (FDH) activity. Acts as a sulfur carrier protein that transfers sulfur from IscS to the molybdenum cofactor prior to its insertion into FDH. In Saccharolobus solfataricus (strain ATCC 35092 / DSM 1617 / JCM 11322 / P2) (Sulfolobus solfataricus), this protein is Sulfur carrier protein FdhD.